A 158-amino-acid chain; its full sequence is Pathogenesis-related protein 1 (158 aa).

It belongs to the BetVI family.

The protein localises to the cytoplasm. This chain is Pathogenesis-related protein 1 (PR1), found in Asparagus officinalis (Garden asparagus).